A 284-amino-acid chain; its full sequence is Bifunctional protein FolD (284 aa).

NADP(+) contacts are provided by residues glycine 165–serine 167, isoleucine 190, and isoleucine 231.

It belongs to the tetrahydrofolate dehydrogenase/cyclohydrolase family. As to quaternary structure, homodimer.

It carries out the reaction (6R)-5,10-methylene-5,6,7,8-tetrahydrofolate + NADP(+) = (6R)-5,10-methenyltetrahydrofolate + NADPH. The catalysed reaction is (6R)-5,10-methenyltetrahydrofolate + H2O = (6R)-10-formyltetrahydrofolate + H(+). The protein operates within one-carbon metabolism; tetrahydrofolate interconversion. In terms of biological role, catalyzes the oxidation of 5,10-methylenetetrahydrofolate to 5,10-methenyltetrahydrofolate and then the hydrolysis of 5,10-methenyltetrahydrofolate to 10-formyltetrahydrofolate. The sequence is that of Bifunctional protein FolD from Alkaliphilus metalliredigens (strain QYMF).